The chain runs to 898 residues: Endoplasmic reticulum metallopeptidase 1 (898 aa).

At Met1 the chain carries N-acetylmethionine. Residues 1-59 (MEWSSESAAVRRHRGTAERREGQAAASHPQREASAQEDARGGGRMRGRTESGGESRGAK) are disordered. The Cytoplasmic portion of the chain corresponds to 1 to 66 (MEWSSESAAV…GAKTALSEAR (66 aa)). Over residues 37–57 (EDARGGGRMRGRTESGGESRG) the composition is skewed to basic and acidic residues. The helical transmembrane segment at 67 to 87 (TALALALYLLALRALVQLSLQ) threads the bilayer. Topologically, residues 88–393 (RLVLSRTSGL…SSSEYRHGSM (306 aa)) are lumenal. N-linked (GlcNAc...) asparagine glycosylation is present at Asn176. The cysteines at positions 198 and 216 are disulfide-linked. Residues His199 and Asp211 each contribute to the Zn(2+) site. The Proton acceptor role is filled by Glu245. Zn(2+)-binding residues include Glu246, Glu272, and His348. Residues 394–414 (VFFDVLGLLVIAYPSRVGSII) traverse the membrane as a helical segment. The Cytoplasmic segment spans residues 415-451 (NYMVVMAVVLYLGRKLLRPNHSNSNYVRDFLCGLGIT). A helical transmembrane segment spans residues 452-472 (FISWFTSLVTVLIIAVFVSLI). The Lumenal segment spans residues 473–480 (GQSLSWYN). A helical membrane pass occupies residues 481-501 (YFYIAVCLYGTATVAKIILIH). Topologically, residues 502–515 (TLAKRFYYVNASDL) are cytoplasmic. The chain crosses the membrane as a helical span at residues 516-538 (YLGELFFDTSLFVHCGFLVALTA). The Lumenal segment spans residues 539 to 542 (QGFC). A helical membrane pass occupies residues 543–562 (SAFMSAVWVAFPLLTKLCVY). The Cytoplasmic portion of the chain corresponds to 563–573 (KDFKKHGAKGR). A helical membrane pass occupies residues 574–594 (FIALYLLGMFIPYLYGLYLIW). Topologically, residues 595–615 (AVFEMFTPILGRSGSEIPPDV) are lumenal. A helical transmembrane segment spans residues 616 to 636 (VLASILAVCVMILSSYFITFI). At 637 to 645 (YLVNSTKKT) the chain is on the cytoplasmic side. A helical transmembrane segment spans residues 646 to 666 (ILTLILVCAVTFLLVCSGAFF). At 667–898 (PYSSNPDSPK…WVSTYSLFVF (232 aa)) the chain is on the lumenal side. An N-linked (GlcNAc...) asparagine glycan is attached at Asn724.

It belongs to the peptidase M28 family. It depends on Zn(2+) as a cofactor. As to expression, widely expressed, with highest levels in ovary, kidney, hypothalamus and hippocampus. Within the ovarian follicle, expressed in granulosa cells, but not in oocytes. Present in both preantral and antral follicles, but not in atretic antral follicle.

Its subcellular location is the endoplasmic reticulum membrane. Its function is as follows. Within the ovary, required for the organization of somatic cells and oocytes into discrete follicular structures. In Rattus norvegicus (Rat), this protein is Endoplasmic reticulum metallopeptidase 1.